A 268-amino-acid polypeptide reads, in one-letter code: Undecaprenyl-diphosphatase (268 aa).

Helical transmembrane passes span 11–33 (FLGL…LLLI), 46–66 (FEVL…SAKL), 84–104 (LGVL…HGFI), 107–127 (VLFE…FILL), 144–164 (YPLP…IPGV), 185–205 (AEFS…YDLF), 213–233 (FNDG…GVFV), and 246–266 (FALF…ALII).

This sequence belongs to the UppP family.

The protein localises to the cell inner membrane. It carries out the reaction di-trans,octa-cis-undecaprenyl diphosphate + H2O = di-trans,octa-cis-undecaprenyl phosphate + phosphate + H(+). Functionally, catalyzes the dephosphorylation of undecaprenyl diphosphate (UPP). Confers resistance to bacitracin. The polypeptide is Undecaprenyl-diphosphatase (Brucella suis (strain ATCC 23445 / NCTC 10510)).